The chain runs to 300 residues: 4-hydroxybenzoate octaprenyltransferase (300 aa).

8 helical membrane-spanning segments follow: residues 32–52 (IGTY…SEGA), 55–75 (LKNL…GCVI), 108–128 (LFGI…ALTI), 149–169 (YLPQ…AFAA), 178–198 (AWLL…MYAM), 222–242 (AAVA…GAQH), 246–266 (VYYQ…QHLI), and 278–298 (FLNN…EFLF).

The protein belongs to the UbiA prenyltransferase family. Requires Mg(2+) as cofactor.

The protein localises to the cell inner membrane. The enzyme catalyses all-trans-octaprenyl diphosphate + 4-hydroxybenzoate = 4-hydroxy-3-(all-trans-octaprenyl)benzoate + diphosphate. Its pathway is cofactor biosynthesis; ubiquinone biosynthesis. Catalyzes the prenylation of para-hydroxybenzoate (PHB) with an all-trans polyprenyl group. Mediates the second step in the final reaction sequence of ubiquinone-8 (UQ-8) biosynthesis, which is the condensation of the polyisoprenoid side chain with PHB, generating the first membrane-bound Q intermediate 3-octaprenyl-4-hydroxybenzoate. In Hahella chejuensis (strain KCTC 2396), this protein is 4-hydroxybenzoate octaprenyltransferase.